The chain runs to 450 residues: Magnesium transporter MgtE (450 aa).

At 1 to 283 (MEEKLAVSLQ…SEAGPVALWL (283 aa)) the chain is on the cytoplasmic side. 4 residues coordinate Mg(2+): Glu-59, Asp-91, Asp-95, and Gly-136. 2 CBS domains span residues 138-200 (MTPE…RVAE) and 202-258 (MNPK…EATE). ATP contacts are provided by Tyr-170, Ser-185, Arg-187, Asp-188, and Val-207. Glu-216, Ala-223, Asp-226, Asp-247, Asp-250, Glu-255, Glu-258, and Asp-259 together coordinate Mg(2+). Position 275 (Glu-275) interacts with Ca(2+). Residues Glu-275, Gln-304, Glu-307, and Glu-311 each contribute to the Mn(2+) site. The helical transmembrane segment at 284-306 (ARVRWLVILILTGMVTSSILQGF) threads the bilayer. Residues 307–315 (ESVLEAVTA) are Periplasmic-facing. Glu-311 serves as a coordination point for Ca(2+). Residues 316-337 (LAFYVPVLLGTGGNTGNQSATL) form a helical membrane-spanning segment. At 338–351 (IIRALATRDLDLRD) the chain is on the cytoplasmic side. Residues 352 to 381 (WRRVFLKEMGVGLLLGLTLSFLLVGKVYWD) traverse the membrane as a helical segment. At 382–385 (GHPL) the chain is on the periplasmic side. His-383 is a Mn(2+) binding site. Residues 386–409 (LLPVVGVSLVLIVFFANLVGAMLP) traverse the membrane as a helical segment. Over 410–420 (FLLRRLGVDPA) the chain is Cytoplasmic. The Mg(2+) site is built by Asp-418, Ala-428, and Asp-432. The helical transmembrane segment at 421–443 (LVSNPLVATLSDVTGLLIYLSVA) threads the bilayer. At 444–450 (RLLLEAV) the chain is on the periplasmic side.

Belongs to the SLC41A transporter family. As to quaternary structure, homodimer.

The protein resides in the cell inner membrane. The catalysed reaction is Mg(2+)(in) = Mg(2+)(out). The channel activity is regulated via the N-terminal cytoplasmic region, which acts as a Mg(2+) sensor to regulate the gating of the ion-conducting pore in response to the intracellular magnesium concentration. Under high-intracellular magnesium conditions, binding of magnesium to the N-terminal cytoplasmic domain stabilizes the closed conformation of the channel. Under low-intracellular magnesium conditions, the channel is in equilibrium between the open and closed states. A cation-binding site within the membrane (M1) strictly recognizes the size and geometry of the Mg(2+) hydration shells, which may be important for the selective transport of Mg(2+) over other cations. Cation-binding sites on the periplasmic side (M2 and M3) regulate channel opening and prevent conduction of near-cognate cations. Binding of Mn(2+) to the periplasmic sites strongly inhibits the Mg(2+) transport activity. In addition, activity is regulated by ATP, which binds to MgtE and modulates its Mg(2+)-dependent channel gating. ATP binding enhances the intracellular domain affinity for Mg(2+) within physiological concentrations of this divalent cation, enabling MgtE to function as an in vivo Mg(2+) sensor. ATP dissociation from MgtE upregulates Mg(2+) influx at both high and low intracellular Mg(2+) concentrations. Functionally, highly selective magnesium channel that plays an important role in Mg(2+) homeostasis. Functions as a Mg(2+)-dependent gating channel. Exhibits low activity with cobalt, suggesting that it might also be involved in the uptake of Co(2+) as a micronutrient. Also exhibits low activity with Ca(2+), but it shows almost no activity with Mn(2+). The sequence is that of Magnesium transporter MgtE from Thermus thermophilus (strain ATCC 27634 / DSM 579 / HB8).